The primary structure comprises 133 residues: Profilin (133 aa).

Belongs to the profilin family. Interacts with host TPM1. Interacts with protein A25.

The protein resides in the host cytoplasm. Participates in either intracellular transport of viral proteins or intercellular spread of the virus. Cellular profilins modulate actin filament dynamics (polymerization and depolymerization) via direct binding to actin through an actin-binding domain as well as by modulation of other actin-binding proteins. In contrast to cellular homologs, the poxvirus profilins seem to bind actin only weakly. The chain is Profilin (OPG171) from Variola virus (isolate Human/India/Ind3/1967) (VARV).